We begin with the raw amino-acid sequence, 158 residues long: Protein-export protein SecB (158 aa).

This sequence belongs to the SecB family. Homotetramer, a dimer of dimers. One homotetramer interacts with 1 SecA dimer.

It is found in the cytoplasm. Its function is as follows. One of the proteins required for the normal export of preproteins out of the cell cytoplasm. It is a molecular chaperone that binds to a subset of precursor proteins, maintaining them in a translocation-competent state. It also specifically binds to its receptor SecA. The sequence is that of Protein-export protein SecB from Bartonella quintana (strain Toulouse) (Rochalimaea quintana).